The chain runs to 1235 residues: Major DNA-binding protein (1235 aa).

Positions 536 to 584 are disordered; that stretch reads GGLDGKGDDGVPGGGAGGGGGRDVSGGPSDGLGGGRGGGGGGDSGGMMG. Residues 545-584 show a composition bias toward gly residues; it reads GVPGGGAGGGGGRDVSGGPSDGLGGGRGGGGGGDSGGMMG. The short motif at 846 to 847 is the Required for filament formation element; sequence FW. Residues 1214–1226 are compositionally biased toward gly residues; sequence GVGGSSGGGGGSG. The interval 1214–1235 is disordered; that stretch reads GVGGSSGGGGGSGLLPAKRSRL. A required for nuclear localization region spans residues 1232-1235; it reads RSRL.

The protein belongs to the herpesviridae major DNA-binding protein family. Homooligomers. Forms double-helical filaments necessary for the formation of replication compartments within the host nucleus. Interacts with the origin-binding protein. Interacts with the helicase primase complex; this interaction stimulates primer synthesis activity of the helicase-primase complex. Interacts with the DNA polymerase. Interacts with the alkaline exonuclease; this interaction increases its nuclease processivity.

Its subcellular location is the host nucleus. Plays several crucial roles in viral infection. Participates in the opening of the viral DNA origin to initiate replication by interacting with the origin-binding protein. May disrupt loops, hairpins and other secondary structures present on ssDNA to reduce and eliminate pausing of viral DNA polymerase at specific sites during elongation. Promotes viral DNA recombination by performing strand-transfer, characterized by the ability to transfer a DNA strand from a linear duplex to a complementary single-stranded DNA circle. Can also catalyze the renaturation of complementary single strands. Additionally, reorganizes the host cell nucleus, leading to the formation of prereplicative sites and replication compartments. This process is driven by the protein which can form double-helical filaments in the absence of DNA. The chain is Major DNA-binding protein from Homo sapiens (Human).